We begin with the raw amino-acid sequence, 160 residues long: MAEKTYPMTLEEKEKLEKELEELKLVRRPEIVERIKIARSYGDLSENSEYEAAKDEQAFVEGQISTIETKIRYAEIVNSDAVAADEVAIGKTVTVQEVGETEEEVYHIVGAAGADVFANKISNESPIGHALIGKKTGDVATIETPAGSYDVKILKVEKTK.

The stretch at 1-31 (MAEKTYPMTLEEKEKLEKELEELKLVRRPEI) forms a coiled coil.

It belongs to the GreA/GreB family.

Functionally, necessary for efficient RNA polymerase transcription elongation past template-encoded arresting sites. The arresting sites in DNA have the property of trapping a certain fraction of elongating RNA polymerases that pass through, resulting in locked ternary complexes. Cleavage of the nascent transcript by cleavage factors such as GreA or GreB allows the resumption of elongation from the new 3'terminus. GreA releases sequences of 2 to 3 nucleotides. The sequence is that of Transcription elongation factor GreA from Streptococcus suis (strain 98HAH33).